Here is a 458-residue protein sequence, read N- to C-terminus: Ig mu chain C region secreted form (458 aa).

A CH1 region spans residues 1 to 106; that stretch reads VSLSSPTLYP…SNRDLRVSFP (106 aa). Cysteine 28 and cysteine 90 are disulfide-bonded. 2 N-linked (GlcNAc...) asparagine glycosylation sites follow: asparagine 46 and asparagine 114. Positions 107–222 are CH2; it reads VDSELPPNVS…VSMSSECSTT (116 aa). The cysteines at positions 137 and 200 are disulfide-linked. N-linked (GlcNAc...) asparagine glycosylation is found at asparagine 212, asparagine 261, asparagine 277, and asparagine 284. Positions 223-327 are CH3; that stretch reads PSPGIQVFPI…PLKHTISKSR (105 aa). Cystine bridges form between cysteine 249–cysteine 308 and cysteine 356–cysteine 418. Residues 328-458 are CH4; the sequence is EVAKHPPAVY…IMSDTASTCY (131 aa). Residue asparagine 445 is glycosylated (N-linked (GlcNAc...) asparagine).

Its subcellular location is the secreted. The protein is Ig mu chain C region secreted form of Oryctolagus cuniculus (Rabbit).